A 657-amino-acid polypeptide reads, in one-letter code: 1-deoxy-D-xylulose-5-phosphate synthase (657 aa).

Thiamine diphosphate-binding positions include His-73 and 113-115 (SHA). Asp-145 is a Mg(2+) binding site. Residues 146-147 (GA), Asn-175, Tyr-293, and Glu-375 contribute to the thiamine diphosphate site. Asn-175 is a Mg(2+) binding site.

This sequence belongs to the transketolase family. DXPS subfamily. Homodimer. Mg(2+) is required as a cofactor. Thiamine diphosphate serves as cofactor.

It carries out the reaction D-glyceraldehyde 3-phosphate + pyruvate + H(+) = 1-deoxy-D-xylulose 5-phosphate + CO2. Its pathway is metabolic intermediate biosynthesis; 1-deoxy-D-xylulose 5-phosphate biosynthesis; 1-deoxy-D-xylulose 5-phosphate from D-glyceraldehyde 3-phosphate and pyruvate: step 1/1. In terms of biological role, catalyzes the acyloin condensation reaction between C atoms 2 and 3 of pyruvate and glyceraldehyde 3-phosphate to yield 1-deoxy-D-xylulose-5-phosphate (DXP). The polypeptide is 1-deoxy-D-xylulose-5-phosphate synthase (Renibacterium salmoninarum (strain ATCC 33209 / DSM 20767 / JCM 11484 / NBRC 15589 / NCIMB 2235)).